The primary structure comprises 339 residues: uncharacterized protein (339 aa).

28-35 (GPINSGKT) is a binding site for ATP.

This sequence belongs to the archaeal ATPase family.

This is an uncharacterized protein from Pyrococcus abyssi (strain GE5 / Orsay).